The primary structure comprises 138 residues: 10 kDa chaperonin 1, chloroplastic (138 aa).

Residues 1 to 61 constitute a chloroplast transit peptide; it reads MASSFITVPK…VPQADRVLVR (61 aa). The tract at residues 50–137 is cpn-10 domain; the sequence is KVVPQADRVL…CKESDLLAIV (88 aa).

The protein belongs to the GroES chaperonin family. As to expression, expressed at low levels in germinating seeds, seedlings, rosettes leaves, flowers and siliques.

It localises to the plastid. It is found in the chloroplast. Its function is as follows. Functions as a co-chaperone for protein folding in chloroplasts. The sequence is that of 10 kDa chaperonin 1, chloroplastic from Arabidopsis thaliana (Mouse-ear cress).